The following is a 500-amino-acid chain: Aspartyl/glutamyl-tRNA(Asn/Gln) amidotransferase subunit B (500 aa).

This sequence belongs to the GatB/GatE family. GatB subfamily. Heterotrimer of A, B and C subunits.

It carries out the reaction L-glutamyl-tRNA(Gln) + L-glutamine + ATP + H2O = L-glutaminyl-tRNA(Gln) + L-glutamate + ADP + phosphate + H(+). The enzyme catalyses L-aspartyl-tRNA(Asn) + L-glutamine + ATP + H2O = L-asparaginyl-tRNA(Asn) + L-glutamate + ADP + phosphate + 2 H(+). Its function is as follows. Allows the formation of correctly charged Asn-tRNA(Asn) or Gln-tRNA(Gln) through the transamidation of misacylated Asp-tRNA(Asn) or Glu-tRNA(Gln) in organisms which lack either or both of asparaginyl-tRNA or glutaminyl-tRNA synthetases. The reaction takes place in the presence of glutamine and ATP through an activated phospho-Asp-tRNA(Asn) or phospho-Glu-tRNA(Gln). The polypeptide is Aspartyl/glutamyl-tRNA(Asn/Gln) amidotransferase subunit B (Rhizobium leguminosarum bv. trifolii (strain WSM2304)).